We begin with the raw amino-acid sequence, 184 residues long: Photosystem I assembly protein Ycf4 (184 aa).

2 helical membrane-spanning segments follow: residues 19 to 39 (ISNFCWAFILFLGSLGFLLVG) and 57 to 77 (IVFFPQGIVMSFYGIAGLFIS).

It belongs to the Ycf4 family.

It localises to the plastid. It is found in the chloroplast thylakoid membrane. In terms of biological role, seems to be required for the assembly of the photosystem I complex. This Nicotiana tomentosiformis (Tobacco) protein is Photosystem I assembly protein Ycf4.